A 134-amino-acid chain; its full sequence is Small ribosomal subunit protein uS9 (134 aa).

This sequence belongs to the universal ribosomal protein uS9 family.

The chain is Small ribosomal subunit protein uS9 from Pseudothermotoga lettingae (strain ATCC BAA-301 / DSM 14385 / NBRC 107922 / TMO) (Thermotoga lettingae).